The chain runs to 229 residues: NAD-dependent protein deacetylase (229 aa).

Residues 1–229 enclose the Deacetylase sirtuin-type domain; that stretch reads MNKLNEALKK…SDAVKVFAEI (229 aa). NAD(+)-binding residues include alanine 20, arginine 32, glutamine 96, isoleucine 98, aspartate 99, histidine 114, threonine 181, serine 182, asparagine 205, and valine 223. Residues isoleucine 98 and aspartate 99 each contribute to the nicotinamide site. Histidine 114 acts as the Proton acceptor in catalysis.

Belongs to the sirtuin family. Class U subfamily.

It localises to the cytoplasm. It catalyses the reaction N(6)-acetyl-L-lysyl-[protein] + NAD(+) + H2O = 2''-O-acetyl-ADP-D-ribose + nicotinamide + L-lysyl-[protein]. Its function is as follows. NAD-dependent protein deacetylase which modulates the activities of several enzymes which are inactive in their acetylated form. This chain is NAD-dependent protein deacetylase, found in Listeria monocytogenes serotype 4b (strain F2365).